The following is a 209-amino-acid chain: Ribosomal RNA small subunit methyltransferase G (209 aa).

Residues glycine 75, leucine 80, 126 to 127, and arginine 141 contribute to the S-adenosyl-L-methionine site; that span reads VE.

This sequence belongs to the methyltransferase superfamily. RNA methyltransferase RsmG family.

It localises to the cytoplasm. The enzyme catalyses guanosine(527) in 16S rRNA + S-adenosyl-L-methionine = N(7)-methylguanosine(527) in 16S rRNA + S-adenosyl-L-homocysteine. Its function is as follows. Specifically methylates the N7 position of guanine in position 527 of 16S rRNA. This is Ribosomal RNA small subunit methyltransferase G from Colwellia psychrerythraea (strain 34H / ATCC BAA-681) (Vibrio psychroerythus).